A 3032-amino-acid chain; its full sequence is Compactin nonaketide synthase, polyketide synthase component (3032 aa).

The region spanning 8 to 447 (NEPIVVVGSG…GTNAHAIIEE (440 aa)) is the Ketosynthase family 3 (KS3) domain. Active-site for beta-ketoacyl synthase activity residues include Cys181, His320, and His367. The segment at 560-901 (VFTGQGAQWP…GYIWERFGVR (342 aa)) is acyl and malonyl transferase. Ser654 serves as the catalytic For malonyltransferase activity. Residues 953–1089 (HLLLGKLSSY…GQIVITLGEA (137 aa)) are N-terminal hotdog fold. The region spanning 953-1261 (HLLLGKLSSY…FKPFSPPTAS (309 aa)) is the PKS/mFAS DH domain. His985 serves as the catalytic Proton acceptor; for dehydratase activity. The segment at 985–997 (HALQGQTVFPAAG) is dehydratase-like. Residues 1106–1261 (MNNVNIDFFY…FKPFSPPTAS (156 aa)) are C-terminal hotdog fold. The active-site Proton donor; for dehydratase activity is Asp1168. Positions 1506–1544 (YDLIIASDVLHASSNFEEKLAHIRSLLKPGGHLVTFGVT) are methyltransferase. Positions 2441-2520 (DQVRQIVIDG…DLADDAATRL (80 aa)) constitute a Carrier domain. O-(pantetheine 4'-phosphoryl)serine is present on Ser2480. Residues 2531 to 2580 (IGDSTGTSDSGASPTPTDSHDEASSATSTDASSAEEDEEQEDDNEQGGRK) form a disordered region. The segment covering 2532 to 2547 (GDSTGTSDSGASPTPT) has biased composition (low complexity). The span at 2563–2575 (SAEEDEEQEDDNE) shows a compositional bias: acidic residues. The peptide synthetase elongation stretch occupies residues 2586 to 2946 (RLSLGQEYSW…PKTQTHAPLF (361 aa)).

Requires pantetheine 4'-phosphate as cofactor.

The catalysed reaction is holo-[compactin nonaketide synthase] + 9 malonyl-CoA + 11 NADPH + 20 H(+) = dihydro-ML-236C-[compactin nonaketide synthase] + 9 CO2 + 11 NADP(+) + 9 CoA + 6 H2O. It participates in polyketide biosynthesis. In terms of biological role, nonaketide synthase; part of the gene cluster that mediates the biosynthesis of compactin, also known as mevastatin or ML-236B, and which acts as a potent competitive inhibitor of HMG-CoA reductase. Compactin biosynthesis is performed in two stages. The first stage is catalyzed by the nonaketide synthase mlcA, which belongs to type I polyketide synthases and catalyzes the iterative nine-step formation of the polyketide. This PKS stage is completed by the action of dehydrogenase mlcG, which catalyzes the NADPH-dependent reduction of the unsaturated tetra-, penta- and heptaketide intermediates that arise during the mlcA-mediated biosynthesis of the nonaketide chain and leads to dihydro-ML-236C carboxylate. Covalently bound dihydro-ML-236C carboxylate is released from mlcA by the mlcF esterase. Conversion of dihydro-ML-236C carboxylate into ML-236A carboxylate is subsequently performed with the participation of molecular oxygen and P450 monoogygenase mlcC. Finally, mlcH performs the conversion of ML-236A carboxylate to ML-236B/compactin carboxylate through the addition of the side-chain diketide moiety produced by the diketide synthase mlcB. The sequence is that of Compactin nonaketide synthase, polyketide synthase component from Penicillium citrinum.